We begin with the raw amino-acid sequence, 212 residues long: Outer-membrane lipoprotein carrier protein (212 aa).

The first 25 residues, Met1 to Ala25, serve as a signal peptide directing secretion.

The protein belongs to the LolA family. In terms of assembly, monomer.

The protein resides in the periplasm. Its function is as follows. Participates in the translocation of lipoproteins from the inner membrane to the outer membrane. Only forms a complex with a lipoprotein if the residue after the N-terminal Cys is not an aspartate (The Asp acts as a targeting signal to indicate that the lipoprotein should stay in the inner membrane). The protein is Outer-membrane lipoprotein carrier protein of Cupriavidus pinatubonensis (strain JMP 134 / LMG 1197) (Cupriavidus necator (strain JMP 134)).